A 164-amino-acid polypeptide reads, in one-letter code: DNA-directed RNA polymerase 19 kDa subunit (164 aa).

Residues 1-35 (MADTDDIIDYESDDLTEYEDDEEEEEDGESLETSD) show a composition bias toward acidic residues. Positions 1–39 (MADTDDIIDYESDDLTEYEDDEEEEEDGESLETSDIDPK) are disordered.

This sequence belongs to the poxviridae DNA-directed RNA polymerase 19 kDa subunit family. As to quaternary structure, the DNA-dependent RNA polymerase used for intermediate and late genes expression consists of eight subunits Rpo30/OPG66, Rpo7/OPG90, Rpo22/OPG103, Rpo147/OPG105, Rpo18/OPG119, Rpo19/OPG131, Rpo132/OPG151 and Rpo35/OPG156. The same holoenzyme, with the addition of the transcription-specificity factor OPG109, is used for early gene expression.

The protein localises to the virion. The enzyme catalyses RNA(n) + a ribonucleoside 5'-triphosphate = RNA(n+1) + diphosphate. Its function is as follows. Part of the DNA-dependent RNA polymerase which catalyzes the transcription of viral DNA into RNA using the four ribonucleoside triphosphates as substrates. Responsible for the transcription of early, intermediate and late genes. DNA-dependent RNA polymerase associates with the early transcription factor (ETF), itself composed of OPG118 and OPG133, thereby allowing the early genes transcription. Late transcription, and probably also intermediate transcription, require newly synthesized RNA polymerase. The chain is DNA-directed RNA polymerase 19 kDa subunit (OPG131) from Homo sapiens (Human).